Reading from the N-terminus, the 221-residue chain is Growth hormone-releasing peptides (221 aa).

The N-terminal stretch at 1–25 is a signal peptide; sequence MHLKIGTLTIRTIMLFTLCTFLTLF. The propeptide occupies 26 to 95; the sequence is AFSTCFDETK…QPENEFLQER (70 aa). Position 107 is a phenylalanine amide (F107). Positions 110 to 127 are excised as a propeptide; sequence TSDDKIAKSIPSFDKIAK. 3 positions are modified to phenylalanine amide: F136, F156, and F176. Residues 179–221 constitute a propeptide that is removed on maturation; the sequence is TPHSDRLQYEMNSHPLELKNPEEDSDRKKRQAMTFRIRTDLQM.

This sequence belongs to the FARP (FMRFamide related peptide) family. In terms of tissue distribution, observed in the suprachiasmatic nucleus and in several telencephalic and diencephalic regions.

The protein resides in the secreted. Primary role is to release GH from the pituitary. May act as an endogenous ligand in the bullfrog hypothalamo-hypophysial system. The protein is Growth hormone-releasing peptides of Aquarana catesbeiana (American bullfrog).